The primary structure comprises 354 residues: Petrobactin import system permease protein FatC (354 aa).

The next 9 membrane-spanning stretches (helical) occupy residues 37–57 (YWIVLITLIALGLLSSYGLLV), 77–97 (IVAIVAMIIAAVCHSLSTVAF), 116–136 (LYSAIQTSTVFFFGASALINF), 141–161 (SFLFQVVVMVFMSLILYGWLL), 168–188 (LQLMLLVGIIIGTGLNSVSTF), 214–234 (PAYFPIVIPMIIIVAVLIFAH), 259–279 (VIYTLVLVAILMSISTALIGP), 302–322 (YIFPMAFAIGFLIMTSAYFLM), and 329–349 (QGVVSVIIELFGGIIFLTIVL).

This sequence belongs to the binding-protein-dependent transport system permease family. FecCD subfamily. In terms of assembly, the complex is composed of two ATP-binding proteins (FatE), two transmembrane proteins (FatC and FatD) and a solute-binding protein (FpuA).

The protein localises to the cell membrane. Its function is as follows. Part of an ABC transporter complex involved in ferric-petrobactin uptake. Probably responsible for the translocation of the substrate across the membrane. The chain is Petrobactin import system permease protein FatC from Bacillus anthracis.